We begin with the raw amino-acid sequence, 199 residues long: Imidazole glycerol phosphate synthase subunit HisH (199 aa).

The Glutamine amidotransferase type-1 domain maps to 1-199; that stretch reads MTVVVDYEMG…QILKNLREML (199 aa). The Nucleophile role is filled by Cys79. Active-site residues include His180 and Glu182.

Heterodimer of HisH and HisF.

The protein localises to the cytoplasm. It catalyses the reaction 5-[(5-phospho-1-deoxy-D-ribulos-1-ylimino)methylamino]-1-(5-phospho-beta-D-ribosyl)imidazole-4-carboxamide + L-glutamine = D-erythro-1-(imidazol-4-yl)glycerol 3-phosphate + 5-amino-1-(5-phospho-beta-D-ribosyl)imidazole-4-carboxamide + L-glutamate + H(+). The enzyme catalyses L-glutamine + H2O = L-glutamate + NH4(+). The protein operates within amino-acid biosynthesis; L-histidine biosynthesis; L-histidine from 5-phospho-alpha-D-ribose 1-diphosphate: step 5/9. Its function is as follows. IGPS catalyzes the conversion of PRFAR and glutamine to IGP, AICAR and glutamate. The HisH subunit catalyzes the hydrolysis of glutamine to glutamate and ammonia as part of the synthesis of IGP and AICAR. The resulting ammonia molecule is channeled to the active site of HisF. The polypeptide is Imidazole glycerol phosphate synthase subunit HisH (Carboxydothermus hydrogenoformans (strain ATCC BAA-161 / DSM 6008 / Z-2901)).